A 343-amino-acid polypeptide reads, in one-letter code: Anthranilate phosphoribosyltransferase (343 aa).

5-phospho-alpha-D-ribose 1-diphosphate is bound by residues glycine 84, 87-88, threonine 92, 94-97, 112-120, and serine 124; these read GD, NIST, and KHGNRGVSS. An anthranilate-binding site is contributed by glycine 84. Position 96 (serine 96) interacts with Mg(2+). Residue asparagine 115 participates in anthranilate binding. Arginine 170 lines the anthranilate pocket. The Mg(2+) site is built by aspartate 229 and glutamate 230.

This sequence belongs to the anthranilate phosphoribosyltransferase family. Homodimer. Mg(2+) is required as a cofactor.

The catalysed reaction is N-(5-phospho-beta-D-ribosyl)anthranilate + diphosphate = 5-phospho-alpha-D-ribose 1-diphosphate + anthranilate. It participates in amino-acid biosynthesis; L-tryptophan biosynthesis; L-tryptophan from chorismate: step 2/5. Its function is as follows. Catalyzes the transfer of the phosphoribosyl group of 5-phosphorylribose-1-pyrophosphate (PRPP) to anthranilate to yield N-(5'-phosphoribosyl)-anthranilate (PRA). The polypeptide is Anthranilate phosphoribosyltransferase (Burkholderia orbicola (strain MC0-3)).